A 185-amino-acid polypeptide reads, in one-letter code: MKFTIVFAGLLGVFLAPALANYNINVNDDNNNAGSGQQSVSVNNEHNVANVDNNNGWDSWNSIWDYGNGFAATRLFQKKTCIVHKMNKEVMPSIQSLDALVKEKKLQGKGPGGPPPKGLMYSVNPNKVDDLSKFGKNIANMCRGIPTYMAEEMQEASLFFYSGTCYTTSVLWIVDISFCGDTVEN.

Positions methionine 1 to alanine 20 are cleaved as a signal peptide. The BRICHOS domain occupies asparagine 54–alanine 150. A disulfide bond links cysteine 81 and cysteine 142.

This sequence belongs to the gastrokine family. In terms of tissue distribution, expressed in stomach (at protein level). No expression is detected in cancer tissue or gastric cancer cell lines.

Its subcellular location is the secreted. It localises to the cytoplasmic granule. The protein localises to the golgi apparatus. In terms of biological role, has mitogenic activity and may be involved in maintaining the integrity of the gastric mucosal epithelium. The sequence is that of Gastrokine-1 (GKN1) from Homo sapiens (Human).